We begin with the raw amino-acid sequence, 286 residues long: Large ribosomal subunit protein uL4m (286 aa).

The transit peptide at 1–26 (MTIKRNLVKTLQSIRYQATTATAHAE) directs the protein to the mitochondrion. The segment at 85–132 (RRVGASNPPGRSENGFSRRKLMPQKGSGRARVGDANSPTRHNGGRALA) is disordered.

Belongs to the universal ribosomal protein uL4 family. As to quaternary structure, component of the mitochondrial large ribosomal subunit (mt-LSU). Mature yeast 74S mitochondrial ribosomes consist of a small (37S) and a large (54S) subunit. The 37S small subunit contains a 15S ribosomal RNA (15S mt-rRNA) and 34 different proteins. The 54S large subunit contains a 21S rRNA (21S mt-rRNA) and 46 different proteins.

The protein localises to the mitochondrion. Its function is as follows. Component of the mitochondrial ribosome (mitoribosome), a dedicated translation machinery responsible for the synthesis of mitochondrial genome-encoded proteins, including at least some of the essential transmembrane subunits of the mitochondrial respiratory chain. The mitoribosomes are attached to the mitochondrial inner membrane and translation products are cotranslationally integrated into the membrane. The protein is Large ribosomal subunit protein uL4m (YML6) of Saccharomyces cerevisiae (strain ATCC 204508 / S288c) (Baker's yeast).